An 84-amino-acid polypeptide reads, in one-letter code: Alpha-mammal toxin Ts2 (84 aa).

Residues 1–20 (MKGFLLFISILMMIGTIVVG) form the signal peptide. The LCN-type CS-alpha/beta domain maps to 21–83 (KEGYAMDHEG…VWDYATNKCG (63 aa)). Disulfide bonds link C31/C82, C35/C58, C43/C63, and C47/C65. C82 is subject to Cysteine amide.

This sequence belongs to the long (4 C-C) scorpion toxin superfamily. Sodium channel inhibitor family. Beta subfamily. Expressed by the venom gland.

The protein resides in the secreted. Alpha toxins bind voltage-independently at site-3 of sodium channels (Nav) and inhibit the inactivation of the activated channels, thereby blocking neuronal transmission. This toxin acts on Nav1.2/SCN2A, Nav1.3/SCN3A, Nav1.5/SCN5A, Nav1.6/SCN8A and Nav1.7/SCN9A voltage-gated sodium channels, with the highest affinity for Nav1.3/SCN3A, followed by Nav1.6/SCN8A and Nav1.7/SCN9A which are affected almost equally. Interestingly, shows a significant shift of the voltage dependence of activation for Nav1.3/SCN3A that is characteristic of beta-toxins. In addition, in presence of LPS, this toxin inhibits the release of NO, IL-6 and TNF-alpha in J774.1 cells. Further, in the absence of LPS, it stimulates the production of the anti-inflammatory cytokine IL-10. This toxin is active on mammals. In Tityus serrulatus (Brazilian scorpion), this protein is Alpha-mammal toxin Ts2.